Here is a 298-residue protein sequence, read N- to C-terminus: Nucleotide-binding protein RSKD131_3085 (298 aa).

11–18 is an ATP binding site; that stretch reads GPSGAGRT. GTP is bound at residue 58–61; that stretch reads DVRN.

It belongs to the RapZ-like family.

Its function is as follows. Displays ATPase and GTPase activities. This chain is Nucleotide-binding protein RSKD131_3085, found in Cereibacter sphaeroides (strain KD131 / KCTC 12085) (Rhodobacter sphaeroides).